The primary structure comprises 585 residues: MTKSVKKNIKNEISIIVANLALSKNIKLDKININIQKPPKSDLGDISILIFELSKTLELPIATISEEIIKTLKSKYEIKAMGPYLNIKIPRKEYINNTIQMVNAQKDSYGTSKYLDNKKIILEFSSPNTNKPLHVGHLRNDAIGESLSRILKAVGAKITKINLINDRGVHICKSMLAYKKFGNCITPEKAFKKGDHLIGEFYVEYNKYSQENENAEKEIQDLLLKWEQKDKNTIELWEKLNKWAIEGIKETYKTTNISFDKIYLESEIFEIGKNVVLEGLEKGFCYKREDGAICIDLPSDSDEKAEAKAKQKVLIRSNGTSIYLTQDLGNIAIRTKEFNFDEMIYVVGSEQIQHFKNLFFVSEKLGISKNKQLIHLSHGMVNLIDGKMKSREGNVIDGDNLILELIESIMPEITQKIDNKENAKKNALNIALGAIHYYLLKSAVHKDIVFNKKESLSFTGNSGPYIQYVGARINSILEKYNALSIPIIKKINFELLKHEKEWEIIKIISELEENIIKAAKDLNPSILTNYSYSLAKHFSAYYQEVKVIDINNTDLTAARIEFLKTILQTIKNCMHLLNIPYMLKM.

Residues 127–137 (PNTNKPLHVGH) carry the 'HIGH' region motif.

It belongs to the class-I aminoacyl-tRNA synthetase family. Monomer.

The protein localises to the cytoplasm. It carries out the reaction tRNA(Arg) + L-arginine + ATP = L-arginyl-tRNA(Arg) + AMP + diphosphate. The sequence is that of Arginine--tRNA ligase from Borrelia garinii subsp. bavariensis (strain ATCC BAA-2496 / DSM 23469 / PBi) (Borreliella bavariensis).